Consider the following 509-residue polypeptide: Heat shock 70 kDa protein 14 (509 aa).

This sequence belongs to the heat shock protein 70 family. In terms of assembly, component of ribosome-associated complex (RAC), a heterodimer composed of Hsp70/DnaK-type chaperone HSPA14 and Hsp40/DnaJ-type chaperone DNAJC2.

Its subcellular location is the cytoplasm. It localises to the cytosol. In terms of biological role, component of the ribosome-associated complex (RAC), a complex involved in folding or maintaining nascent polypeptides in a folding-competent state. In the RAC complex, binds to the nascent polypeptide chain, while DNAJC2 stimulates its ATPase activity. This is Heat shock 70 kDa protein 14 (HSPA14) from Bos taurus (Bovine).